The following is a 1117-amino-acid chain: MEIKDQGAQMEPLLPTRNDEEAVVDRGGTRSILKTHFEKEDLEGHRTLFIGVHVPLGGRKSHRRHRHRGHKHRKRDRERDSGLEDGGESPSFDTPSQRVQFILGTEDDDEEHIPHDLFTELDEICWREGEDAEWRETARWLKFEEDVEDGGERWSKPYVATLSLHSLFELRSCILNGTVLLDMHANTLEEIADMVLDQQVSSGQLNEDVRHRVHEALMKQHHHQSQKKLTNRIPIVRSFADIGKKQSEPNSMDKNGQVVSPQSAPACAENKNDVSRENSTVDFSKGLGGQQKGHTSPCGMKQRLDKGPPHQQEREVDLHFMKKIPPGAEASNILVGELEFLDRTVVAFVRLSPAVLLQGLAEVPIPSRFLFILLGPLGKGQQYHEIGRSIATLMTDEVFHDVAYKAKDRNDLVSGIDEFLDQVTVLPPGEWDPSIRIEPPKNVPSQEKRKTPSLPNGTAAHGGPEQHGGHSGPELQRTGRIFGGLILDIKRKAPFFWSDFRDAFSLQCLASFLFLYCACMSPVITFGGLLGEATEGRISAIESLFGASMTGIAYSLFGGQPLTILGSTGPVLVFEKILFKFCKEYGLSYLSLRASIGLWTATLCIILVATDASSLVCYITRFTEEAFASLICIIFIYEALEKLFELSESYPINMHNDLELLTQYSCNCMEPHSPSNDTLKEWRESNISASDIIWGNLTVSECRSLHGEYVGRACGHGHPYVPDVLFWSVILFFSTVTMSATLKQFKTSRYFPTKVRSIVSDFAVFLTILCMVLIDYAIGIPSPKLQVPSVFKPTRDDRGWFVTPLGPNPWWTIIAAIIPALLCTILIFMDQQITAVIINRKEHKLKKGCGYHLDLLMVAVMLGVCSIMGLPWFVAATVLSITHVNSLKLESECSAPGEQPKFLGIREQRVTGLMIFILMGSSVFMTSILKFIPMPVLYGVFLYMGASSLKGIQLFDRIKLFWMPAKHQPDFIYLRHVPLRKVHLFTVIQMSCLGLLWIIKVSRAAIVFPMMVLALVFVRKLMDFLFTKRELSWLDDLMPESKKKKLEDAEKEEEQSMLAMEDEGTVQLPLEGHYRDDPSVINISDEMSKTAMWGNLLVTADNSKEKESRFPSKSSPS.

Disordered regions lie at residues 1-23 and 58-97; these read MEIK…EEAV and GRKS…TPSQ. The Cytoplasmic segment spans residues 1 to 508; that stretch reads MEIKDQGAQM…DFRDAFSLQC (508 aa). Basic residues predominate over residues 59–76; the sequence is RKSHRRHRHRGHKHRKRD. Position 89 is a phosphoserine (Ser-89). Thr-94 carries the phosphothreonine modification. Phosphoserine is present on Ser-275. 2 disordered regions span residues 282-309 and 431-476; these read DFSK…KGPP and WDPS…PELQ. The helical transmembrane segment at 509-529 threads the bilayer; sequence LASFLFLYCACMSPVITFGGL. At 530–537 the chain is on the extracellular side; it reads LGEATEGR. The helical transmembrane segment at 538–558 threads the bilayer; that stretch reads ISAIESLFGASMTGIAYSLFG. Topologically, residues 559–561 are cytoplasmic; the sequence is GQP. Residues 562-582 form a helical membrane-spanning segment; the sequence is LTILGSTGPVLVFEKILFKFC. The Extracellular portion of the chain corresponds to 583-595; that stretch reads KEYGLSYLSLRAS. A helical transmembrane segment spans residues 596 to 616; it reads IGLWTATLCIILVATDASSLV. The Cytoplasmic portion of the chain corresponds to 617–625; that stretch reads CYITRFTEE. Residues 626–646 form a helical membrane-spanning segment; the sequence is AFASLICIIFIYEALEKLFEL. At 647 to 719 the chain is on the extracellular side; that stretch reads SESYPINMHN…VGRACGHGHP (73 aa). 3 N-linked (GlcNAc...) asparagine glycosylation sites follow: Asn-676, Asn-686, and Asn-696. The helical transmembrane segment at 720 to 740 threads the bilayer; sequence YVPDVLFWSVILFFSTVTMSA. Residues 741–761 are Cytoplasmic-facing; sequence TLKQFKTSRYFPTKVRSIVSD. Residues 762–782 traverse the membrane as a helical segment; sequence FAVFLTILCMVLIDYAIGIPS. The Extracellular portion of the chain corresponds to 783–808; the sequence is PKLQVPSVFKPTRDDRGWFVTPLGPN. A helical membrane pass occupies residues 809-829; the sequence is PWWTIIAAIIPALLCTILIFM. At 830–854 the chain is on the cytoplasmic side; sequence DQQITAVIINRKEHKLKKGCGYHLD. The helical transmembrane segment at 855–875 threads the bilayer; it reads LLMVAVMLGVCSIMGLPWFVA. The Extracellular portion of the chain corresponds to 876 to 911; the sequence is ATVLSITHVNSLKLESECSAPGEQPKFLGIREQRVT. Residues 912–932 traverse the membrane as a helical segment; that stretch reads GLMIFILMGSSVFMTSILKFI. At 933 to 934 the chain is on the cytoplasmic side; the sequence is PM. A helical transmembrane segment spans residues 935 to 955; that stretch reads PVLYGVFLYMGASSLKGIQLF. The Extracellular portion of the chain corresponds to 956–997; that stretch reads DRIKLFWMPAKHQPDFIYLRHVPLRKVHLFTVIQMSCLGLLW. Residues 998-1018 traverse the membrane as a helical segment; sequence IIKVSRAAIVFPMMVLALVFV. Over 1019–1117 the chain is Cytoplasmic; sequence RKLMDFLFTK…SRFPSKSSPS (99 aa). Residues Ser-1056 and Ser-1084 each carry the phosphoserine modification.

This sequence belongs to the anion exchanger (TC 2.A.31) family. Post-translationally, N-glycosylated. In the brain, detected in cerebral cortex, subcortex, cerebellum, hippocampus and medulla (at protein level). Expressed in neurons but not in astrocytes (at protein level). Isoforms starting with Met-Glu-Ile-Lys are found predominantly in the brain with lower levels in the eye while isoforms starting with Met-Cys-Asp-Leu are most abundant in the kidney with lower levels in the duodenum, jejunum and ileum (at protein level). In the kidney, isoforms starting with Met-Cys-Asp-Leu are primarily expressed in the cortex, the outer stripe of the outer medulla and the inner stripe of the outer medulla (ISOM) but are not detectable in the inner medulla (IM) while isoforms starting with Met-Glu-Ile-Lys are predominantly expressed in the ISOM and IM. Expressed in the brain, in the hippocampus as well as in dentate gyrus, cortical layers, cerebellum, olfactory bulb and in the epithelial cells of the choroid plexus. Detected in pituitary, testis, kidney and ileum. Detected also in spleen and lung. In terms of tissue distribution, mainly expressed in the jejenum (at protein level).

The protein localises to the basolateral cell membrane. Its subcellular location is the apical cell membrane. The protein resides in the cell projection. It is found in the dendrite. It localises to the axon. The protein localises to the perikaryon. Its subcellular location is the presynapse. The protein resides in the postsynapse. It catalyses the reaction 2 hydrogencarbonate(out) + chloride(in) + Na(+)(out) = 2 hydrogencarbonate(in) + chloride(out) + Na(+)(in). Functionally, sodium/bicarbonate cotransporter which plays an important role in regulating intracellular pH. Has been shown to act as a sodium/bicarbonate cotransporter in exchange for intracellular chloride. Has also been shown to act as a sodium/biocarbonate cotransporter which does not couple net influx of bicarbonate to net efflux of chloride, with the observed chloride efflux being due to chloride self-exchange. Controls neuronal pH and may contribute to the secretion of cerebrospinal fluid. Acting on presynaptic intracellular pH, it promotes GABA release, reduces the excitability of CA1 pyramidal neurons, and modulates short-term synaptic plasticity. Required in retinal cells to maintain normal pH which is necessary for normal vision. In the kidney, likely to mediate bicarbonate reclamation in the apical membrane of the proximal tubules. Its function is as follows. Sodium/bicarbonate cotransporter which mediates cotransport of sodium and bicarbonate in association with an efflux of intracellular chloride and is involved in NaCl absorption in the small intestine. The polypeptide is Sodium-driven chloride bicarbonate exchanger (Rattus norvegicus (Rat)).